The sequence spans 70 residues: Pyruvate-flavodoxin oxidoreductase (70 aa).

This sequence belongs to the pyruvate:ferredoxin/flavodoxin oxidoreductase family.

It catalyses the reaction oxidized [flavodoxin] + pyruvate + CoA + 2 H(+) = reduced [flavodoxin] + acetyl-CoA + CO2. In terms of biological role, oxidoreductase required for the transfer of electrons from pyruvate to flavodoxin, which reduces nitrogenase. This is Pyruvate-flavodoxin oxidoreductase (nifJ) from Anabaena variabilis.